The chain runs to 352 residues: Protein-glutamate methylesterase/protein-glutamine glutaminase 2 (352 aa).

In terms of domain architecture, Response regulatory spans 6–124 (KVLIVEDSLV…NAGYDTMAAK (119 aa)). Position 57 is a 4-aspartylphosphate (aspartate 57). The region spanning 162–343 (PGTYSMVGIV…LPLPAIAARL (182 aa)) is the CheB-type methylesterase domain. Residues serine 173, histidine 200, and aspartate 292 contribute to the active site.

Belongs to the CheB family. Post-translationally, phosphorylated by CheA. Phosphorylation of the N-terminal regulatory domain activates the methylesterase activity.

It is found in the cytoplasm. It catalyses the reaction [protein]-L-glutamate 5-O-methyl ester + H2O = L-glutamyl-[protein] + methanol + H(+). The catalysed reaction is L-glutaminyl-[protein] + H2O = L-glutamyl-[protein] + NH4(+). Involved in chemotaxis. Part of a chemotaxis signal transduction system that modulates chemotaxis in response to various stimuli. Catalyzes the demethylation of specific methylglutamate residues introduced into the chemoreceptors (methyl-accepting chemotaxis proteins or MCP) by CheR. Also mediates the irreversible deamidation of specific glutamine residues to glutamic acid. The chain is Protein-glutamate methylesterase/protein-glutamine glutaminase 2 from Paramagnetospirillum magneticum (strain ATCC 700264 / AMB-1) (Magnetospirillum magneticum).